The primary structure comprises 194 residues: Acireductone dioxygenase 1 (194 aa).

The disordered stretch occupies residues 1–21 (MEAWYMDDSADDQRKPHHRSP). H87, H89, E93, and H132 together coordinate Fe(2+). Residues H87, H89, E93, and H132 each contribute to the Ni(2+) site.

It belongs to the acireductone dioxygenase (ARD) family. The cofactor is Fe(2+). Requires Ni(2+) as cofactor.

It localises to the cytoplasm. Its subcellular location is the nucleus. It catalyses the reaction 1,2-dihydroxy-5-(methylsulfanyl)pent-1-en-3-one + O2 = 4-methylsulfanyl-2-oxobutanoate + formate + 2 H(+). The catalysed reaction is 1,2-dihydroxy-5-(methylsulfanyl)pent-1-en-3-one + O2 = 3-(methylsulfanyl)propanoate + CO + formate + 2 H(+). The protein operates within amino-acid biosynthesis; L-methionine biosynthesis via salvage pathway; L-methionine from S-methyl-5-thio-alpha-D-ribose 1-phosphate: step 5/6. Functionally, catalyzes 2 different reactions between oxygen and the acireductone 1,2-dihydroxy-3-keto-5-methylthiopentene (DHK-MTPene) depending upon the metal bound in the active site. Fe-containing acireductone dioxygenase (Fe-ARD) produces formate and 2-keto-4-methylthiobutyrate (KMTB), the alpha-ketoacid precursor of methionine in the methionine recycle pathway. Ni-containing acireductone dioxygenase (Ni-ARD) produces methylthiopropionate, carbon monoxide and formate, and does not lie on the methionine recycle pathway. The sequence is that of Acireductone dioxygenase 1 from Physcomitrium patens (Spreading-leaved earth moss).